Here is a 738-residue protein sequence, read N- to C-terminus: MATKFPSFSQGLAQDPTTRRIWYGIATAHDFESHDGMTEEKLYQKLFSTHFGHLAIIGLWVSGNLFHIAWQGNFEQWVADPLHVRPIAHAIWDPHFGQGAIDAFTQAGASSPVNIAYSGLYHWFYTIGMTTNAELYQGSIFMMILSAWALFAGWLHLQPKFRPSLAWFKNAESRLNHHLAVLFGFSSIAWTGHLVHVAIPESRGQHVGWDNFLNVMPHPAGLGPFFTGNWGVYAQNPDTMGQVFGSAEGSGTAILTFLGGFHPQTEALWLTDIAHHHLAIGVIFVIAGHMYRTNFGIGHSIREILEAHNPPQGTPGDLGAGHKGLYDTINNSLHFQLGLALASLGVVTSLVAQHMYAMPSYAFIAKDYTTQAALYTHHQYIAIFLMCGAFAHGAIFFIRDYDPEANKDNVLARMLEHKEAIISHLSWVSLFLGFHTLGLYVHNDVVVAFGTPEKQILVEPVFAQFVQAASGKAIYGFDVLLANTGGVAANANAAYMGGWMDAINGVRGSNDLFLPIGPGDFLVHHAIALGLHTTTLILVKGALDARGSKLMPDKKDFGYSFPCDGPGRGGTCDISAWDAFYLAVFWALNTVGWVTFYWHWKHLAIWQGNVAQFNESSTYLMGWFRDYLWLNSSQLINGYNPFGSNNLAVWAWMFLFGHLVWATGFMFLISWRGYWQELIETIVWAHQRTPLANLVGWRDKPVALSIVQARVVGLAHFTIGYILTYAAFLIASTSGKFG.

8 helical membrane-spanning segments follow: residues 46–69, 135–158, 175–199, 273–291, 333–356, 372–398, 420–442, and 521–539; these read LFST…FHIA, LYQG…LHLQ, LNHH…HVAI, IAHH…GHMY, LHFQ…QHMY, AALY…IFFI, AIIS…LYVH, and FLVH…LILV. 2 residues coordinate [4Fe-4S] cluster: cysteine 563 and cysteine 572. Helical transmembrane passes span 579-600 and 647-669; these read AFYL…YWHW and LAVW…MFLI. Chlorophyll a-binding residues include histidine 658, methionine 666, and tyrosine 674. Residue tryptophan 675 coordinates phylloquinone. Residues 711-731 traverse the membrane as a helical segment; sequence VVGLAHFTIGYILTYAAFLIA.

Belongs to the PsaA/PsaB family. In terms of assembly, the PsaA/B heterodimer binds the P700 chlorophyll special pair and subsequent electron acceptors. PSI consists of a core antenna complex that captures photons, and an electron transfer chain that converts photonic excitation into a charge separation. The cyanobacterial PSI reaction center is composed of one copy each of PsaA,B,C,D,E,F,I,J,K,L,M and X, and forms trimeric complexes. PSI electron transfer chain: 5 chlorophyll a, 1 chlorophyll a', 2 phylloquinones and 3 4Fe-4S clusters. PSI core antenna: 90 chlorophyll a, 22 carotenoids, 3 phospholipids and 1 galactolipid. P700 is a chlorophyll a/chlorophyll a' dimer, A0 is one or more chlorophyll a, A1 is one or both phylloquinones and FX is a shared 4Fe-4S iron-sulfur center. serves as cofactor.

The protein localises to the cellular thylakoid membrane. It catalyses the reaction reduced [plastocyanin] + hnu + oxidized [2Fe-2S]-[ferredoxin] = oxidized [plastocyanin] + reduced [2Fe-2S]-[ferredoxin]. PsaA and PsaB bind P700, the primary electron donor of photosystem I (PSI), as well as the electron acceptors A0, A1 and FX. PSI is a plastocyanin/cytochrome c6-ferredoxin oxidoreductase, converting photonic excitation into a charge separation, which transfers an electron from the donor P700 chlorophyll pair to the spectroscopically characterized acceptors A0, A1, FX, FA and FB in turn. Oxidized P700 is reduced on the lumenal side of the thylakoid membrane by plastocyanin or cytochrome c6. In Synechococcus sp. (strain WH7803), this protein is Photosystem I P700 chlorophyll a apoprotein A2.